A 613-amino-acid chain; its full sequence is 4-hydroxy-3-methylbut-2-en-1-yl diphosphate synthase (flavodoxin) (613 aa).

Residues Cys-514, Cys-517, Cys-548, and Glu-555 each contribute to the [4Fe-4S] cluster site.

This sequence belongs to the IspG family. [4Fe-4S] cluster is required as a cofactor.

It catalyses the reaction (2E)-4-hydroxy-3-methylbut-2-enyl diphosphate + oxidized [flavodoxin] + H2O + 2 H(+) = 2-C-methyl-D-erythritol 2,4-cyclic diphosphate + reduced [flavodoxin]. It participates in isoprenoid biosynthesis; isopentenyl diphosphate biosynthesis via DXP pathway; isopentenyl diphosphate from 1-deoxy-D-xylulose 5-phosphate: step 5/6. In terms of biological role, converts 2C-methyl-D-erythritol 2,4-cyclodiphosphate (ME-2,4cPP) into 1-hydroxy-2-methyl-2-(E)-butenyl 4-diphosphate. This chain is 4-hydroxy-3-methylbut-2-en-1-yl diphosphate synthase (flavodoxin), found in Chlamydia pneumoniae (Chlamydophila pneumoniae).